The following is a 96-amino-acid chain: Aspartyl/glutamyl-tRNA(Asn/Gln) amidotransferase subunit C (96 aa).

Residues Arg64 to Glu96 are disordered.

It belongs to the GatC family. Heterotrimer of A, B and C subunits.

The enzyme catalyses L-glutamyl-tRNA(Gln) + L-glutamine + ATP + H2O = L-glutaminyl-tRNA(Gln) + L-glutamate + ADP + phosphate + H(+). It catalyses the reaction L-aspartyl-tRNA(Asn) + L-glutamine + ATP + H2O = L-asparaginyl-tRNA(Asn) + L-glutamate + ADP + phosphate + 2 H(+). Allows the formation of correctly charged Asn-tRNA(Asn) or Gln-tRNA(Gln) through the transamidation of misacylated Asp-tRNA(Asn) or Glu-tRNA(Gln) in organisms which lack either or both of asparaginyl-tRNA or glutaminyl-tRNA synthetases. The reaction takes place in the presence of glutamine and ATP through an activated phospho-Asp-tRNA(Asn) or phospho-Glu-tRNA(Gln). This chain is Aspartyl/glutamyl-tRNA(Asn/Gln) amidotransferase subunit C, found in Geobacillus thermodenitrificans (strain NG80-2).